Reading from the N-terminus, the 590-residue chain is Major surface protein MspTL (590 aa).

The first 19 residues, 1 to 19, serve as a signal peptide directing secretion; it reads MKKILAFFLVFALAGAVFA.

The protein resides in the cell outer membrane. In terms of biological role, major component of the outer membrane. The polypeptide is Major surface protein MspTL (mspTL) (Treponema lecithinolyticum).